The following is a 79-amino-acid chain: Ketoisovalerate oxidoreductase subunit VorC (79 aa).

4Fe-4S ferredoxin-type domains lie at 4 to 33 (AYPV…MSNK) and 40 to 70 (HYVE…VHIE). Residues Cys13, Cys16, Cys19, Cys23, Cys49, Cys52, Cys55, and Cys59 each contribute to the [4Fe-4S] cluster site.

Heterotrimer of the VorA, VorB and VorC subunits. It depends on [4Fe-4S] cluster as a cofactor.

The catalysed reaction is 3-methyl-2-oxobutanoate + 2 oxidized [2Fe-2S]-[ferredoxin] + CoA = 2-methylpropanoyl-CoA + 2 reduced [2Fe-2S]-[ferredoxin] + CO2 + H(+). This chain is Ketoisovalerate oxidoreductase subunit VorC (vorC), found in Methanothermobacter marburgensis (strain ATCC BAA-927 / DSM 2133 / JCM 14651 / NBRC 100331 / OCM 82 / Marburg) (Methanobacterium thermoautotrophicum).